The sequence spans 404 residues: Aspergillopepsin-1 (404 aa).

The first 20 residues, 1-20 (MVILSKVAAVAVGLSTVASA), serve as a signal peptide directing secretion. Residues 21 to 77 (LPTGPSHSPHARRGFTINQITRQTARVGPKTASFPAIYSRALAKYGGTVPAHLKSAV) constitute a propeptide, activation peptide. A Peptidase A1 domain is found at 95 to 401 (YLTPVNIGGT…DSQGPRLGFA (307 aa)). Asp-111 is an active-site residue. Asn-140 carries an N-linked (GlcNAc...) asparagine glycan. Residue Asp-293 is part of the active site. An intrachain disulfide couples Cys-329 to Cys-364.

It belongs to the peptidase A1 family. Monomer.

Its subcellular location is the secreted. It carries out the reaction Hydrolysis of proteins with broad specificity. Generally favors hydrophobic residues in P1 and P1', but also accepts Lys in P1, which leads to activation of trypsinogen. Does not clot milk.. Functionally, secreted aspartic endopeptidase that allows assimilation of proteinaceous substrates. The scissile peptide bond is attacked by a nucleophilic water molecule activated by two aspartic residues in the active site. Shows a broad primary substrate specificity. Favors hydrophobic residues at the P1 and P1' positions, but also accepts a lysine residue in the P1 position, leading to the activation of trypsinogen and chymotrypsinogen A. The polypeptide is Aspergillopepsin-1 (pepA) (Aspergillus flavus (strain ATCC 200026 / FGSC A1120 / IAM 13836 / NRRL 3357 / JCM 12722 / SRRC 167)).